The primary structure comprises 194 residues: uncharacterized protein (194 aa).

A signal peptide spans 1 to 29; the sequence is MKKAFLVFLSVVLVTTVFLVKQQESVAQA. A coiled-coil region spans residues 104-131; the sequence is KVDELLKKAGQIVEEKVEAAKEIAASKD. A helical transmembrane segment spans residues 149-171; it reads YFYYVSYVAAAGALILIILAIDI.

It is found in the membrane. This is an uncharacterized protein from Bacillus subtilis (strain 168).